We begin with the raw amino-acid sequence, 41 residues long: Photosystem II reaction center protein Y (41 aa).

Position 1 is an N-formylmethionine (Met1). The Lumenal segment spans residues 1–4 (MDWR). A helical transmembrane segment spans residues 5-23 (VLVVLLPVLLAAGWAVRNI). The Cytoplasmic segment spans residues 24–41 (LPYAVKQVQKLLQKAKAA).

The protein belongs to the PsbY family. In terms of assembly, PSII is composed of 1 copy each of membrane proteins PsbA, PsbB, PsbC, PsbD, PsbE, PsbF, PsbH, PsbI, PsbJ, PsbK, PsbL, PsbM, PsbT, PsbX, PsbY, PsbZ, Psb30/Ycf12, peripheral proteins PsbO, CyanoQ (PsbQ), PsbU, PsbV and a large number of cofactors. It forms dimeric complexes. This protein is only loosely associated with PSII, and is not often found in crystals. Found on the exterior of the PSII dimer, near cytochrome b559 (psbE and psbF). PSII binds multiple chlorophylls, carotenoids and specific lipids. is required as a cofactor.

The protein localises to the cellular thylakoid membrane. In terms of biological role, loosely associated component of the core of photosystem II, it is not always seen in crystals. PSII is a light-driven water plastoquinone oxidoreductase, using light energy to abstract electrons from H(2)O, generating a proton gradient subsequently used for ATP formation. In Thermosynechococcus vestitus (strain NIES-2133 / IAM M-273 / BP-1), this protein is Photosystem II reaction center protein Y.